Here is a 140-residue protein sequence, read N- to C-terminus: Nucleoside diphosphate kinase (140 aa).

ATP contacts are provided by K11, F59, R87, T93, R104, and N114. H117 functions as the Pros-phosphohistidine intermediate in the catalytic mechanism.

This sequence belongs to the NDK family. As to quaternary structure, homotetramer. Requires Mg(2+) as cofactor.

The protein resides in the cytoplasm. The enzyme catalyses a 2'-deoxyribonucleoside 5'-diphosphate + ATP = a 2'-deoxyribonucleoside 5'-triphosphate + ADP. It catalyses the reaction a ribonucleoside 5'-diphosphate + ATP = a ribonucleoside 5'-triphosphate + ADP. Major role in the synthesis of nucleoside triphosphates other than ATP. The ATP gamma phosphate is transferred to the NDP beta phosphate via a ping-pong mechanism, using a phosphorylated active-site intermediate. This chain is Nucleoside diphosphate kinase, found in Sinorhizobium fredii (strain NBRC 101917 / NGR234).